Consider the following 492-residue polypeptide: Catalase isozyme B (492 aa).

Positions 1–20 (MDPYKHRPSSGSNSTFWTTN) are disordered. A compositionally biased stretch (polar residues) spans 9–20 (SSGSNSTFWTTN). Arg62 is a binding site for heme. His65 is a catalytic residue. Arg102 contacts heme. Residue Asn138 is part of the active site. Phe151 contacts heme. Phosphotyrosine is present on Tyr210. A cross-link (3-(S-cysteinyl)-tyrosine (Cys-Tyr)) is located at residues 325 to 348 (CPAIIVPGIHYSDDKLLQTRIFSY). The heme site is built by Arg344, Tyr348, and Arg355. Residues 484-492 (SRLNLKPNM) carry the Peroxisome targeting signal motif.

The protein belongs to the catalase family. Homotetramer. Interacts with GLO1 and GLO4; these interactions are disturbed by alpha-hydroxy-2-pyridinemethanesulfonic acid (HPMS) and salicylic acid (SA). Interacts with STRK1 at the plasma membrane. Heme is required as a cofactor. In terms of tissue distribution, predominantly expressed in roots and, at low levels, in leaves (e.g. sheaths). Detected in seeds. Also present in panicles and culms. Observed in stems and anthers.

Its subcellular location is the peroxisome. It is found in the glyoxysome. The protein localises to the cell membrane. The enzyme catalyses 2 H2O2 = O2 + 2 H2O. With respect to regulation, strongly inhibited by beta-mercaptoethanol, sodium azide and potassium cyanide. Slightly repressed by 3-amino-1,2,4-triazole (3-AT). Activity is repressed proportionally to increased concentration of NaCl, KCl, LiCl and MgCl(2). Occurs in almost all aerobically respiring organisms and serves to protect cells from the toxic effects of hydrogen peroxide. May prevent the excessive accumulation of H(2)O(2) during water stress in response to the accumulation of abscisic acid (ABA). Involved in the modulation of ROS levels related to root growth regulation. Required for pollen viability and floret fertility upon heat stress (HS) by detoxifying reactive oxygen species (ROS) and malondialdehyde (MDA) accumulation in developing anthers exposed to HS. The sequence is that of Catalase isozyme B (CATB) from Oryza sativa subsp. japonica (Rice).